The chain runs to 394 residues: Elongation factor Tu (394 aa).

Positions 10–204 (KPHVNVGTIG…ALDTYIPEPE (195 aa)) constitute a tr-type G domain. The G1 stretch occupies residues 19–26 (GHVDHGKT). 19–26 (GHVDHGKT) contacts GTP. Position 26 (T26) interacts with Mg(2+). The segment at 60-64 (GITIN) is G2. The interval 81–84 (DCPG) is G3. GTP-binding positions include 81 to 85 (DCPGH) and 136 to 139 (NKCD). Positions 136 to 139 (NKCD) are G4. Residues 174 to 176 (SAL) form a G5 region.

Belongs to the TRAFAC class translation factor GTPase superfamily. Classic translation factor GTPase family. EF-Tu/EF-1A subfamily. Monomer.

The protein resides in the cytoplasm. It carries out the reaction GTP + H2O = GDP + phosphate + H(+). GTP hydrolase that promotes the GTP-dependent binding of aminoacyl-tRNA to the A-site of ribosomes during protein biosynthesis. This is Elongation factor Tu from Shewanella pealeana (strain ATCC 700345 / ANG-SQ1).